We begin with the raw amino-acid sequence, 199 residues long: Early activation antigen CD69 (199 aa).

A disordered region spans residues 1–29 (MSSENCFVAENSSLHPESGQENDATSPHF). Residues 1–40 (MSSENCFVAENSSLHPESGQENDATSPHFSTRHEGSFQVP) lie on the Cytoplasmic side of the membrane. A helical; Signal-anchor for type II membrane protein membrane pass occupies residues 41–61 (VLCAVMNVVFITILIIALIAL). At 62–199 (SVGQYNCPGQ…LYWICNKPYK (138 aa)) the chain is on the extracellular side. 3 disulfide bridges follow: cysteine 85/cysteine 96, cysteine 113/cysteine 194, and cysteine 173/cysteine 186. The region spanning 92 to 195 (YQRKCYFIST…CEKNLYWICN (104 aa)) is the C-type lectin domain. The N-linked (GlcNAc...) asparagine glycan is linked to asparagine 166.

In terms of assembly, homodimer; disulfide-linked. Interacts with S100A8 and S100A9. Interacts with galactin-1/LGALS1. Interacts with S1PR1; this interaction mediates S1PR1 degradation. Post-translationally, constitutive Ser/Thr phosphorylation in both mature thymocytes and activated T-lymphocytes. In terms of tissue distribution, expressed on the surface of activated T-cells, B-cells, natural killer cells, neutrophils, eosinophils, epidermal Langerhans cells and platelets.

The protein resides in the cell membrane. Transmembrane protein expressed mainly on T-cells resident in mucosa that plays an essential role in immune cell homeostasis. Rapidly expressed on the surface of platelets, T-lymphocytes and NK cells upon activation by various stimuli, such as antigen recognition or cytokine signaling, stimulates different signaling pathways in different cell types. Negatively regulates Th17 cell differentiation through its carbohydrate dependent interaction with galectin-1/LGALS1 present on immature dendritic cells. Association of CD69 cytoplasmic tail with the JAK3/STAT5 signaling pathway regulates the transcription of RORgamma/RORC and, consequently, differentiation toward the Th17 lineage. Also acts via the S100A8/S100A9 complex present on peripheral blood mononuclear cells to promote the conversion of naive CD4 T-cells into regulatory T-cells. Acts as an oxidized low-density lipoprotein (oxLDL) receptor in CD4 T-lymphocytes and negatively regulates the inflammatory response by inducing the expression of PDCD1 through the activation of NFAT. Participates in adipose tissue-derived mesenchymal stem cells (ASCs)-mediated protection against P.aeruginosa infection. Mechanistically, specifically recognizes P.aeruginosa to promote ERK1 activation, followed by granulocyte-macrophage colony-stimulating factor (GM-CSF) and other inflammatory cytokines secretion. In eosinophils, induces IL-10 production through the ERK1/2 pathway. Negatively regulates the chemotactic responses of effector lymphocytes and dendritic cells (DCs) to sphingosine 1 phosphate/S1P by acting as a S1PR1 receptor agonist and facilitating the internalization and degradation of the receptor. The sequence is that of Early activation antigen CD69 (CD69) from Homo sapiens (Human).